The following is a 306-amino-acid chain: Ornithine carbamoyltransferase 1, anabolic (306 aa).

Carbamoyl phosphate is bound by residues 53–56 (STRT), Gln80, Arg104, and 131–134 (HPCQ). Residues Asn162, Asp219, and 223-224 (SM) each bind L-ornithine. Carbamoyl phosphate-binding positions include 259-260 (CL) and Arg287.

It belongs to the aspartate/ornithine carbamoyltransferase superfamily. OTCase family. Homotrimer.

It is found in the cytoplasm. It catalyses the reaction carbamoyl phosphate + L-ornithine = L-citrulline + phosphate + H(+). It participates in amino-acid biosynthesis; L-arginine biosynthesis; L-arginine from L-ornithine and carbamoyl phosphate: step 1/3. Its activity is regulated as follows. Reversibly inhibited by inhibited by phaseolotoxin and octicidine. Its function is as follows. Reversibly catalyzes the transfer of the carbamoyl group from carbamoyl phosphate (CP) to the N(epsilon) atom of ornithine (ORN) to produce L-citrulline, which is a substrate for argininosuccinate synthetase, the enzyme involved in the final step in arginine biosynthesis. This is Ornithine carbamoyltransferase 1, anabolic from Pseudomonas savastanoi pv. phaseolicola (Pseudomonas syringae pv. phaseolicola).